Consider the following 87-residue polypeptide: U14-lycotoxin-Ls1b (87 aa).

Positions 1 to 20 are cleaved as a signal peptide; sequence MNSKVFAVLLLLALSTCVLS. One can recognise a WAP domain in the interval 21-66; the sequence is EKYCPTPRNTSCKKMNIRNNCCRDSDCTSNAFCCAEPCGNFCHKAS. Cystine bridges form between cysteine 24–cysteine 54, cysteine 32–cysteine 58, cysteine 41–cysteine 53, cysteine 42–cysteine 80, and cysteine 47–cysteine 62.

It belongs to the venom protein 11 family. 01 (wap-1) subfamily. Post-translationally, contains 5 disulfide bonds. In terms of tissue distribution, expressed by the venom gland.

The protein localises to the secreted. Its function is as follows. Has antibacterial activity. The polypeptide is U14-lycotoxin-Ls1b (Lycosa singoriensis (Wolf spider)).